The primary structure comprises 508 residues: Flagellin (508 aa).

This sequence belongs to the bacterial flagellin family.

The protein localises to the secreted. It localises to the bacterial flagellum. Flagellin is the subunit protein which polymerizes to form the filaments of bacterial flagella. This Salmonella oranienberg protein is Flagellin (fliC).